The following is a 213-amino-acid chain: Thiamine-phosphate synthase (213 aa).

4-amino-2-methyl-5-(diphosphooxymethyl)pyrimidine-binding positions include 38-42 (QLRIK) and asparagine 70. Mg(2+) is bound by residues aspartate 71 and aspartate 90. Serine 109 contributes to the 4-amino-2-methyl-5-(diphosphooxymethyl)pyrimidine binding site. Position 135 to 137 (135 to 137 (TQT)) interacts with 2-[(2R,5Z)-2-carboxy-4-methylthiazol-5(2H)-ylidene]ethyl phosphate. 4-amino-2-methyl-5-(diphosphooxymethyl)pyrimidine is bound at residue lysine 138. Residues glycine 168 and 188-189 (VS) contribute to the 2-[(2R,5Z)-2-carboxy-4-methylthiazol-5(2H)-ylidene]ethyl phosphate site.

This sequence belongs to the thiamine-phosphate synthase family. Mg(2+) is required as a cofactor.

The catalysed reaction is 2-[(2R,5Z)-2-carboxy-4-methylthiazol-5(2H)-ylidene]ethyl phosphate + 4-amino-2-methyl-5-(diphosphooxymethyl)pyrimidine + 2 H(+) = thiamine phosphate + CO2 + diphosphate. It carries out the reaction 2-(2-carboxy-4-methylthiazol-5-yl)ethyl phosphate + 4-amino-2-methyl-5-(diphosphooxymethyl)pyrimidine + 2 H(+) = thiamine phosphate + CO2 + diphosphate. It catalyses the reaction 4-methyl-5-(2-phosphooxyethyl)-thiazole + 4-amino-2-methyl-5-(diphosphooxymethyl)pyrimidine + H(+) = thiamine phosphate + diphosphate. Its pathway is cofactor biosynthesis; thiamine diphosphate biosynthesis; thiamine phosphate from 4-amino-2-methyl-5-diphosphomethylpyrimidine and 4-methyl-5-(2-phosphoethyl)-thiazole: step 1/1. Condenses 4-methyl-5-(beta-hydroxyethyl)thiazole monophosphate (THZ-P) and 2-methyl-4-amino-5-hydroxymethyl pyrimidine pyrophosphate (HMP-PP) to form thiamine monophosphate (TMP). The polypeptide is Thiamine-phosphate synthase (Pectobacterium atrosepticum (strain SCRI 1043 / ATCC BAA-672) (Erwinia carotovora subsp. atroseptica)).